Here is a 309-residue protein sequence, read N- to C-terminus: UPF0282 protein Msed_0584 (309 aa).

It belongs to the UPF0282 family.

The protein is UPF0282 protein Msed_0584 of Metallosphaera sedula (strain ATCC 51363 / DSM 5348 / JCM 9185 / NBRC 15509 / TH2).